A 460-amino-acid polypeptide reads, in one-letter code: Muscarinic acetylcholine receptor M1 (460 aa).

Residues methionine 1 to proline 22 are Extracellular-facing. Residues asparagine 2 and asparagine 12 are each glycosylated (N-linked (GlcNAc...) asparagine). The helical transmembrane segment at tryptophan 23 to isoleucine 48 threads the bilayer. Over serine 49–tyrosine 62 the chain is Cytoplasmic. Residues phenylalanine 63 to threonine 84 form a helical membrane-spanning segment. Over tyrosine 85–threonine 95 the chain is Extracellular. A helical membrane pass occupies residues leucine 96–phenylalanine 121. Cysteines 98 and 178 form a disulfide. The Cytoplasmic segment spans residues aspartate 122–alanine 142. A helical transmembrane segment spans residues alanine 143–tryptophan 164. The Extracellular portion of the chain corresponds to glutamine 165–glutamine 185. Residues proline 186–tryptophan 209 form a helical membrane-spanning segment. Residues arginine 210–threonine 366 lie on the Cytoplasmic side of the membrane. Disordered regions lie at residues leucine 225 to proline 256, tryptophan 274 to proline 296, and glutamate 310 to lysine 351. Threonine 230 carries the phosphothreonine modification. A compositionally biased stretch (low complexity) spans serine 238 to glycine 247. The segment covering arginine 328–proline 343 has biased composition (basic residues). A helical membrane pass occupies residues leucine 367–phenylalanine 390. Residues cysteine 391 to glutamate 397 lie on the Extracellular side of the membrane. Residues threonine 398–leucine 420 form a helical membrane-spanning segment. The Cytoplasmic portion of the chain corresponds to cysteine 421–cysteine 460. Position 428 is a phosphothreonine (threonine 428). The residue at position 451 (serine 451) is a Phosphoserine. Phosphothreonine is present on threonine 455. At serine 457 the chain carries Phosphoserine.

This sequence belongs to the G-protein coupled receptor 1 family. Muscarinic acetylcholine receptor subfamily. CHRM1 sub-subfamily. Interacts with GPRASP2. Interacts with TMEM147.

It is found in the cell membrane. The protein resides in the postsynaptic cell membrane. Its function is as follows. The muscarinic acetylcholine receptor mediates various cellular responses, including inhibition of adenylate cyclase, breakdown of phosphoinositides and modulation of potassium channels through the action of G proteins. Primary transducing effect is Pi turnover. The sequence is that of Muscarinic acetylcholine receptor M1 (CHRM1) from Sus scrofa (Pig).